Reading from the N-terminus, the 200-residue chain is GTP-binding protein rho5 (200 aa).

GTP is bound at residue 13–20 (GDGACGKT). Positions 35–43 (YVPTVFENY) match the Effector region motif. GTP-binding positions include 60 to 64 (DTAGQ) and 118 to 121 (CKVD). Cysteine 197 carries the cysteine methyl ester modification. Residue cysteine 197 is the site of S-geranylgeranyl cysteine attachment. Positions 198-200 (ILL) are cleaved as a propeptide — removed in mature form.

Belongs to the small GTPase superfamily. Rho family.

It is found in the cell membrane. The protein is GTP-binding protein rho5 (rho5) of Schizosaccharomyces pombe (strain 972 / ATCC 24843) (Fission yeast).